The following is a 296-amino-acid chain: Sperm-activating peptides (296 aa).

3 consecutive propeptides follow at residues 1–134 (MPPG…MYKK), 146–190 (MLSN…MILK), and 290–296 (EVEIKDW).

Causes stimulation of sperm respiration and motility through intracellular alkalinization, transient elevations of cAMP, cGMP and calcium levels in sperm cells, and transient activation and subsequent inactivation of the membrane form of guanylate cyclase. This is Sperm-activating peptides from Strongylocentrotus purpuratus (Purple sea urchin).